The sequence spans 217 residues: Phosphatidylcholine synthase (217 aa).

A helical transmembrane segment spans residues 1–8; it reads ACIGVFSL. The Periplasmic portion of the chain corresponds to 9–16; sequence VKIYQHEY. The helical transmembrane segment at 17–37 threads the bilayer; it reads IFALWLMFITVVIDAVDGTLA. Topologically, residues 38–50 are cytoplasmic; sequence RLVNIKKILPKID. Residues 51 to 71 form a helical membrane-spanning segment; sequence GALLDNIVDYLNYVITPCFFL. Topologically, residues 72–77 are periplasmic; that stretch reads LVKPGM. The helical transmembrane segment at 78–98 threads the bilayer; the sequence is LPPEYSVFLIAAVSITSAYQF. Residues 99–107 lie on the Cytoplasmic side of the membrane; the sequence is CQCDAKTPD. The helical transmembrane segment at 108–128 threads the bilayer; sequence HFFKGFPCYWNITILYMFIFN. Residue Thr-129 is a topological domain, periplasmic. Residues 130–149 traverse the membrane as a helical segment; the sequence is SAATNAIILIILSILIFVPV. The Cytoplasmic segment spans residues 150-164; it reads KYVYPSRLDYLTESR. Residues 165–185 form a helical membrane-spanning segment; that stretch reads ILKILMHICSIIYAVSSICIL. Residues 186-191 lie on the Periplasmic side of the membrane; the sequence is ISYPNT. A helical transmembrane segment spans residues 192–212; it reads NIICLSLSVAYVGMYLFLSFY. Over 213 to 217 the chain is Cytoplasmic; the sequence is RTYYP.

Belongs to the CDP-alcohol phosphatidyltransferase class-I family. It depends on Mn(2+) as a cofactor.

The protein localises to the cell inner membrane. The catalysed reaction is a CDP-1,2-diacyl-sn-glycerol + choline = a 1,2-diacyl-sn-glycero-3-phosphocholine + CMP + H(+). In terms of biological role, condenses choline with CDP-diglyceride to produce phosphatidylcholine and CMP. This is Phosphatidylcholine synthase from Legionella bozemanae (Fluoribacter bozemanae).